A 315-amino-acid polypeptide reads, in one-letter code: L-lactate dehydrogenase (315 aa).

Residues Val14, Asp35, Tyr67, and 81–82 (GV) each bind NAD(+). Residues Gln84, Arg91, and 123 to 126 (NPVD) each bind substrate. NAD(+)-binding positions include 121 to 123 (ASN) and Ser146. Residue 151–154 (DSAR) coordinates substrate. His178 serves as the catalytic Proton acceptor. Position 219 is a phosphotyrosine (Tyr219). Thr228 is a binding site for substrate.

The protein belongs to the LDH/MDH superfamily. LDH family. As to quaternary structure, homotetramer.

The protein resides in the cytoplasm. It carries out the reaction (S)-lactate + NAD(+) = pyruvate + NADH + H(+). It functions in the pathway fermentation; pyruvate fermentation to lactate; (S)-lactate from pyruvate: step 1/1. Catalyzes the conversion of lactate to pyruvate. This is L-lactate dehydrogenase from Malacoplasma penetrans (strain HF-2) (Mycoplasma penetrans).